The primary structure comprises 213 residues: MVNYPNGRSQSYSAVPKKQKTLTGLSVAKKGAPKSKSLVAFGKRGMNFEAEINATNDYYLSRGLAVIHKKPTPIQIVKVDYPQRSRAKITEAYFRQASTTDYSGVYKGHYVDFEAKETHQKTVFPLKNFHEHQIVHMSNVLAQRGIAFILLHFAALDETYLLPSSYLITFYYEKNGLKSIPLAYIRENGYKIETNHIPRIPYLEIVNKLCEVQ.

Threonine 99, aspartate 101, glutamate 114, and glutamine 133 together coordinate Mg(2+).

This sequence belongs to the RecU family. The cofactor is Mg(2+).

The protein resides in the cytoplasm. The enzyme catalyses Endonucleolytic cleavage at a junction such as a reciprocal single-stranded crossover between two homologous DNA duplexes (Holliday junction).. Its function is as follows. Endonuclease that resolves Holliday junction intermediates in genetic recombination. Cleaves mobile four-strand junctions by introducing symmetrical nicks in paired strands. Promotes annealing of linear ssDNA with homologous dsDNA. Required for DNA repair, homologous recombination and chromosome segregation. This is Holliday junction resolvase RecU from Lactococcus lactis subsp. cremoris (strain MG1363).